A 330-amino-acid polypeptide reads, in one-letter code: tRNA-modifying protein YgfZ (330 aa).

Residues tryptophan 28 and tryptophan 192 each coordinate folate.

This sequence belongs to the tRNA-modifying YgfZ family.

Its subcellular location is the cytoplasm. Its function is as follows. Folate-binding protein involved in regulating the level of ATP-DnaA and in the modification of some tRNAs. It is probably a key factor in regulatory networks that act via tRNA modification, such as initiation of chromosomal replication. The protein is tRNA-modifying protein YgfZ of Blochmanniella pennsylvanica (strain BPEN).